Reading from the N-terminus, the 338-residue chain is Glycerol-3-phosphate dehydrogenase [NAD(P)+] (338 aa).

NADPH is bound by residues S13, W14, and K108. K108, G139, and S141 together coordinate sn-glycerol 3-phosphate. A143 lines the NADPH pocket. Sn-glycerol 3-phosphate-binding residues include K194, D247, S257, R258, and N259. K194 functions as the Proton acceptor in the catalytic mechanism. Residue R258 coordinates NADPH. NADPH is bound by residues V282 and E284.

The protein belongs to the NAD-dependent glycerol-3-phosphate dehydrogenase family.

The protein resides in the cytoplasm. The enzyme catalyses sn-glycerol 3-phosphate + NAD(+) = dihydroxyacetone phosphate + NADH + H(+). The catalysed reaction is sn-glycerol 3-phosphate + NADP(+) = dihydroxyacetone phosphate + NADPH + H(+). The protein operates within membrane lipid metabolism; glycerophospholipid metabolism. Its function is as follows. Catalyzes the reduction of the glycolytic intermediate dihydroxyacetone phosphate (DHAP) to sn-glycerol 3-phosphate (G3P), the key precursor for phospholipid synthesis. In Streptococcus agalactiae serotype III (strain NEM316), this protein is Glycerol-3-phosphate dehydrogenase [NAD(P)+].